The following is a 1969-amino-acid chain: Echinoderm microtubule-associated protein-like 5 (1969 aa).

10 WD repeats span residues 59 to 100 (GHSD…TISV), 104 to 145 (VHTH…MLSM), 148 to 187 (GHTD…LTPK), 195 to 233 (GDLQ…RTIQ), 235 to 273 (AHAA…TVID), 280 to 321 (GYKG…LIMQ), 323 to 362 (HCEG…LIAR), 406 to 445 (DRKE…KKVG), 449 to 488 (GSLS…EVTS), and 561 to 601 (GHSA…KLKD). Residues 609-633 (ESLADSHSDESDSDLSDVPELDSEI) form a disordered region. Residues 619-633 (SDSDLSDVPELDSEI) are compositionally biased toward acidic residues. WD repeat units follow at residues 725 to 766 (GHDD…PLSI), 770 to 811 (HHQY…KLSI), 814 to 853 (GSKD…LIGR), 861 to 900 (GKND…KTVK), 901 to 940 (AHDG…KTYA), 996 to 1035 (HMEG…CMLA), 1038 to 1077 (KLKK…DLVS), 1080 to 1120 (HRKD…RVGI), and 1236 to 1276 (AHST…YREK). Disordered regions lie at residues 1274–1297 (REKR…YDSD) and 1326–1355 (QQKE…NVGK). Over residues 1281-1294 (SEESDIDSEEDGGY) the composition is skewed to acidic residues. Residues 1326–1337 (QQKEPSIDERPP) are compositionally biased toward basic and acidic residues. WD repeat units lie at residues 1412–1463 (EHND…TLSI), 1467–1508 (YHSK…KIAS), 1511–1550 (GHNQ…LLSK), 1560–1598 (ARMQ…RIVA), 1600–1646 (AHNG…RAFR), 1691–1731 (GHVD…MLNK), 1733–1774 (NLGH…GKKR), 1775–1814 (DRRC…TLNR), 1887–1926 (AEKA…KFAK), and 1932–1969 (GHSP…HTPH).

This sequence belongs to the WD repeat EMAP family.

The protein resides in the cytoplasm. It is found in the cytoskeleton. In terms of biological role, may modify the assembly dynamics of microtubules, such that microtubules are slightly longer, but more dynamic. This chain is Echinoderm microtubule-associated protein-like 5 (EML5), found in Homo sapiens (Human).